The sequence spans 33 residues: Photosystem II reaction center protein Psb30 (33 aa).

Residues 5-25 (VLAQLTVLTLIVISGPLVIAL) traverse the membrane as a helical segment.

This sequence belongs to the Psb30/Ycf12 family. PSII is composed of 1 copy each of membrane proteins PsbA, PsbB, PsbC, PsbD, PsbE, PsbF, PsbH, PsbI, PsbJ, PsbK, PsbL, PsbM, PsbT, PsbX, PsbY, PsbZ, Psb30/Ycf12, peripheral proteins of the oxygen-evolving complex and a large number of cofactors. It forms dimeric complexes.

The protein localises to the plastid. The protein resides in the chloroplast thylakoid membrane. A core subunit of photosystem II (PSII), probably helps stabilize the reaction center. This chain is Photosystem II reaction center protein Psb30, found in Cycas taitungensis (Prince sago).